We begin with the raw amino-acid sequence, 221 residues long: Putative efflux system component YhbJ (221 aa).

The chain crosses the membrane as a helical span at residues 17-37 (LILTNIIGLIVVLAIIAGGAY).

Belongs to the membrane fusion protein (MFP) (TC 8.A.1) family.

It localises to the cell membrane. The polypeptide is Putative efflux system component YhbJ (yhbJ) (Bacillus subtilis (strain 168)).